A 292-amino-acid chain; its full sequence is 4-hydroxy-tetrahydrodipicolinate synthase (292 aa).

Residue Thr-45 coordinates pyruvate. The Proton donor/acceptor role is filled by Tyr-133. Lys-161 (schiff-base intermediate with substrate) is an active-site residue. Residue Ile-203 participates in pyruvate binding.

This sequence belongs to the DapA family. Homotetramer; dimer of dimers.

Its subcellular location is the cytoplasm. The enzyme catalyses L-aspartate 4-semialdehyde + pyruvate = (2S,4S)-4-hydroxy-2,3,4,5-tetrahydrodipicolinate + H2O + H(+). Its pathway is amino-acid biosynthesis; L-lysine biosynthesis via DAP pathway; (S)-tetrahydrodipicolinate from L-aspartate: step 3/4. Functionally, catalyzes the condensation of (S)-aspartate-beta-semialdehyde [(S)-ASA] and pyruvate to 4-hydroxy-tetrahydrodipicolinate (HTPA). In Acidiphilium cryptum (strain JF-5), this protein is 4-hydroxy-tetrahydrodipicolinate synthase.